Consider the following 364-residue polypeptide: C2 calcium-dependent domain-containing protein 4A (364 aa).

Disordered stretches follow at residues 118–175 (GSPS…PPRC) and 192–242 (AGRS…RPER). Over residues 220-233 (SPGSPTQAPVTSLS) the composition is skewed to polar residues. Positions 254–364 (AGGALRLAAE…ELLLGPLLLL (111 aa)) constitute a C2 domain.

The protein belongs to the C2CD4 family.

It localises to the nucleus. Functionally, may be involved in inflammatory process. May regulate cell architecture and adhesion. In Bos taurus (Bovine), this protein is C2 calcium-dependent domain-containing protein 4A (C2CD4A).